Consider the following 426-residue polypeptide: Probable serine/threonine-protein kinase PBL3 (426 aa).

Positions M1–L42 are disordered. G2 carries N-myristoyl glycine lipidation. A lipid anchor (S-palmitoyl cysteine) is attached at C4. Positions S7–L42 are enriched in low complexity. At T72 the chain carries Phosphothreonine. One can recognise a Protein kinase domain in the interval F83–L366. ATP contacts are provided by residues L89 to V97 and K121. Y166 is modified (phosphotyrosine). The Proton acceptor role is filled by D216. Position 250 is a phosphoserine (S250). Residues T251 and T256 each carry the phosphothreonine modification. Y264 is subject to Phosphotyrosine. Positions E367–Q394 are enriched in polar residues. A disordered region spans residues E367–R426.

This sequence belongs to the protein kinase superfamily. Ser/Thr protein kinase family. In terms of assembly, interacts with the Xanthomonas campestris effector XopAC/AvrAC. In terms of tissue distribution, strongly expressed in leaves, moderately in flowers, and barely in roots.

The protein localises to the cell membrane. It is found in the nucleus. The enzyme catalyses L-seryl-[protein] + ATP = O-phospho-L-seryl-[protein] + ADP + H(+). It catalyses the reaction L-threonyl-[protein] + ATP = O-phospho-L-threonyl-[protein] + ADP + H(+). In terms of biological role, may be involved in plant defense signaling. This chain is Probable serine/threonine-protein kinase PBL3, found in Arabidopsis thaliana (Mouse-ear cress).